Consider the following 203-residue polypeptide: MKKQLMTSCLFAAVLAAPAFAEDADVLQSRLNQVNSFHASFTQRVTGAEGGAVQEGEGELWIKRPNLFNWHMTTPDESVLVSDGKTLWFYNPFVEQAIANWLKNATGNTPFMLITRNSAADWGQYNVKQQGDSFSLVPKADNGNLKQFTINVTANGTITGFTAVEQDGQRSTYQLKSQKNGPVDDAKFHFTLPKGVTLDDQRQ.

The first 21 residues, 1–21 (MKKQLMTSCLFAAVLAAPAFA), serve as a signal peptide directing secretion.

The protein belongs to the LolA family. Monomer.

It is found in the periplasm. In terms of biological role, participates in the translocation of lipoproteins from the inner membrane to the outer membrane. Only forms a complex with a lipoprotein if the residue after the N-terminal Cys is not an aspartate (The Asp acts as a targeting signal to indicate that the lipoprotein should stay in the inner membrane). The protein is Outer-membrane lipoprotein carrier protein of Sodalis glossinidius (strain morsitans).